The primary structure comprises 656 residues: Vacuolar amino acid transporter 3 (656 aa).

Residues 1–109 (MSNSQSIKIK…VPSTSEDPDV (109 aa)) form a disordered region. A compositionally biased stretch (polar residues) spans 15–28 (NENFASGSYSSRRS). Phosphoserine occurs at positions 37 and 53. Residues 50-71 (ISPSESNLPNNVAENTTDTPVN) are compositionally biased toward polar residues. Basic and acidic residues predominate over residues 75–97 (IRDENHNSRKGKDVTLNSDEAHS). Position 172 is a phosphoserine (Ser-172). 11 helical membrane passes run 280-300 (AVLL…PKAF), 307-327 (FSSA…LLLI), 351-371 (FAIL…YISF), 389-409 (EYHL…LSLV), 419-439 (ALIA…WDVI), 457-477 (FSLF…ILPI), 494-514 (VMAA…AAFG), 537-557 (LYAI…IAII), 578-598 (YLRV…SSRL), 601-621 (FVSM…PPML), and 636-656 (DIFM…MTFF).

This sequence belongs to the amino acid/polyamine transporter 2 family.

It is found in the endoplasmic reticulum membrane. The protein localises to the vacuole membrane. Its function is as follows. Involved in amino acid efflux from the vacuole to the cytoplasm. Capable of transporting large neutral amino acids including tyrosine, glutamine, asparagine, isoleucine and leucine. Required for spore formation. The chain is Vacuolar amino acid transporter 3 (avt3) from Schizosaccharomyces pombe (strain 972 / ATCC 24843) (Fission yeast).